A 223-amino-acid polypeptide reads, in one-letter code: Type III pantothenate kinase (223 aa).

Residue Asp-17 to His-24 participates in ATP binding. Substrate is bound by residues Tyr-81 and Gly-85–Arg-88. Catalysis depends on Asp-87, which acts as the Proton acceptor. Position 102 (Asp-102) interacts with K(+). Ser-105 is an ATP binding site. Position 157 (Thr-157) interacts with substrate.

It belongs to the type III pantothenate kinase family. Homodimer. Requires NH4(+) as cofactor. It depends on K(+) as a cofactor.

It is found in the cytoplasm. The catalysed reaction is (R)-pantothenate + ATP = (R)-4'-phosphopantothenate + ADP + H(+). Its pathway is cofactor biosynthesis; coenzyme A biosynthesis; CoA from (R)-pantothenate: step 1/5. Functionally, catalyzes the phosphorylation of pantothenate (Pan), the first step in CoA biosynthesis. The chain is Type III pantothenate kinase from Helicobacter pylori (strain HPAG1).